The chain runs to 168 residues: 3-dehydroquinate dehydratase (168 aa).

The active-site Proton acceptor is the Tyr22. The substrate site is built by Asn76, His82, and Asp89. His102 functions as the Proton donor in the catalytic mechanism. Substrate contacts are provided by residues Leu103–Thr104 and Arg113.

This sequence belongs to the type-II 3-dehydroquinase family. In terms of assembly, homododecamer.

It carries out the reaction 3-dehydroquinate = 3-dehydroshikimate + H2O. It participates in metabolic intermediate biosynthesis; chorismate biosynthesis; chorismate from D-erythrose 4-phosphate and phosphoenolpyruvate: step 3/7. Functionally, catalyzes a trans-dehydration via an enolate intermediate. This Helicobacter acinonychis (strain Sheeba) protein is 3-dehydroquinate dehydratase.